A 303-amino-acid polypeptide reads, in one-letter code: Tyrosine recombinase XerC (303 aa).

Residues Met1–Leu85 form the Core-binding (CB) domain. Positions Lys106–Asp285 constitute a Tyr recombinase domain. Catalysis depends on residues Arg146, Lys170, His237, Arg240, and His263. Tyr272 serves as the catalytic O-(3'-phospho-DNA)-tyrosine intermediate.

Belongs to the 'phage' integrase family. XerC subfamily. Forms a cyclic heterotetrameric complex composed of two molecules of XerC and two molecules of XerD.

The protein localises to the cytoplasm. Site-specific tyrosine recombinase, which acts by catalyzing the cutting and rejoining of the recombining DNA molecules. The XerC-XerD complex is essential to convert dimers of the bacterial chromosome into monomers to permit their segregation at cell division. It also contributes to the segregational stability of plasmids. This Pseudomonas aeruginosa (strain LESB58) protein is Tyrosine recombinase XerC.